The primary structure comprises 186 residues: Dynactin subunit 3 (186 aa).

Ala2 is modified (N-acetylalanine).

The protein belongs to the dynactin subunit 3 family. In terms of assembly, subunit of dynactin, a multiprotein complex part of a tripartite complex with dynein and a adapter, such as BICDL1, BICD2 or HOOK3. The dynactin complex is built around ACTR1A/ACTB filament and consists of an actin-related filament composed of a shoulder domain, a pointed end and a barbed end. Its length is defined by its flexible shoulder domain. The soulder is composed of 2 DCTN1 subunits, 4 DCTN2 and 2 DCTN3. The 4 DCNT2 (via N-terminus) bind the ACTR1A filament and act as molecular rulers to determine the length. The pointed end is important for binding dynein-dynactin cargo adapters. Consists of 4 subunits: ACTR10, DCNT4, DCTN5 and DCTN6. The barbed end is composed of a CAPZA1:CAPZB heterodimers, which binds ACTR1A/ACTB filament and dynactin and stabilizes dynactin.

The protein resides in the cytoplasm. Its subcellular location is the cytoskeleton. It is found in the microtubule organizing center. The protein localises to the centrosome. It localises to the chromosome. The protein resides in the centromere. Its subcellular location is the kinetochore. It is found in the spindle. The protein localises to the cleavage furrow. It localises to the midbody. Part of the dynactin complex that activates the molecular motor dynein for ultra-processive transport along microtubules. Together with dynein is involved in spindle assembly and cytokinesis. The sequence is that of Dynactin subunit 3 from Sus scrofa (Pig).